Here is a 222-residue protein sequence, read N- to C-terminus: Ribonuclease HII (222 aa).

An RNase H type-2 domain is found at 32-222; it reads FHIAGVDEVG…LIKRYKEDIS (191 aa). 3 residues coordinate a divalent metal cation: Asp38, Glu39, and Asp130.

It belongs to the RNase HII family. Mn(2+) is required as a cofactor. The cofactor is Mg(2+).

It is found in the cytoplasm. It catalyses the reaction Endonucleolytic cleavage to 5'-phosphomonoester.. Functionally, endonuclease that specifically degrades the RNA of RNA-DNA hybrids. The sequence is that of Ribonuclease HII from Bartonella bacilliformis (strain ATCC 35685 / KC583 / Herrer 020/F12,63).